Here is a 505-residue protein sequence, read N- to C-terminus: MEELQGYLGIDRSCQQRFLYPLLFQESIYALAHDYGLNGSILYEPIENLGYDNKPSLLIVKRLIIRMHQQNLFFILVNGSNQNRFVGHNRSFYSQMISEGFAGIVEIPLSMRLASSLEQIAKSHNLRSIHSIFPFLEDKFSHLNHVSDILIPHPVHLEILVQTLRRWIQDAPSLHLLRFFLHGHPNWNSLITPKKSISLFSKENPRFFLFLYNSYVYEYESILVFLHKQSSHLRSISSGAFLERTNFYGKTEHLLVVLRNDFQKTLWLWLFKDPFMHYARYQGKAIMASKGTHLLMKKWKYHLVNFWQLHFYLWSQSGRIRINELSNHFFYFPGYLSGIRLNPSVVRGQMIENSFMIDTGIKKFDMIVPIIPLIGSLVKAKFCNISGYPISKSVRADSSNSDIINRFGRICRNLSHYHSGSSKKHNLYRIKYILRLSCAKTLARKHKSTVRTILKRLGSELLEEFLTEKEEILSLISPRTSSPPHREEGIWYLDIIHIHGMSNHS.

The protein belongs to the intron maturase 2 family. MatK subfamily.

It localises to the plastid. It is found in the chloroplast. In terms of biological role, usually encoded in the trnK tRNA gene intron. Probably assists in splicing its own and other chloroplast group II introns. This chain is Maturase K, found in Illicium oligandrum (Star anise).